Consider the following 77-residue polypeptide: Large ribosomal subunit protein bL31 (77 aa).

Belongs to the bacterial ribosomal protein bL31 family. Type A subfamily. Part of the 50S ribosomal subunit.

Binds the 23S rRNA. The sequence is that of Large ribosomal subunit protein bL31 from Synechococcus elongatus (strain ATCC 33912 / PCC 7942 / FACHB-805) (Anacystis nidulans R2).